A 552-amino-acid chain; its full sequence is Glutamine--tRNA ligase (552 aa).

The 'HIGH' region signature appears at 34–44 (PEPNGYLHIGH). Residues 35–37 (EPN) and 41–47 (HIGHAKS) each bind ATP. L-glutamine-binding residues include aspartate 67 and tyrosine 212. Residues threonine 231, 261–262 (RL), and 269–271 (MSK) contribute to the ATP site. Positions 268 to 272 (IMSKR) match the 'KMSKS' region motif.

Belongs to the class-I aminoacyl-tRNA synthetase family. In terms of assembly, monomer.

Its subcellular location is the cytoplasm. The enzyme catalyses tRNA(Gln) + L-glutamine + ATP = L-glutaminyl-tRNA(Gln) + AMP + diphosphate. The sequence is that of Glutamine--tRNA ligase from Aliivibrio salmonicida (strain LFI1238) (Vibrio salmonicida (strain LFI1238)).